A 463-amino-acid polypeptide reads, in one-letter code: tRNA (guanine(37)-N(1))-methyltransferase (463 aa).

S-adenosyl-L-methionine is bound by residues H207, 245 to 246 (DL), 274 to 275 (DG), and N305.

This sequence belongs to the class I-like SAM-binding methyltransferase superfamily. TRM5/TYW2 family. In terms of assembly, monomer.

Its subcellular location is the mitochondrion matrix. It is found in the nucleus. The protein resides in the cytoplasm. It carries out the reaction guanosine(37) in tRNA + S-adenosyl-L-methionine = N(1)-methylguanosine(37) in tRNA + S-adenosyl-L-homocysteine + H(+). In terms of biological role, specifically methylates the N1 position of guanosine-37 in various cytoplasmic and mitochondrial tRNAs. Methylation is not dependent on the nature of the nucleoside 5' of the target nucleoside. This is the first step in the biosynthesis of wybutosine (yW), a modified base adjacent to the anticodon of tRNAs and required for accurate decoding. The polypeptide is tRNA (guanine(37)-N(1))-methyltransferase (Pediculus humanus subsp. corporis (Body louse)).